A 507-amino-acid polypeptide reads, in one-letter code: MLAGQALAFLGLTWGTFQSLAIPRITECGLSCSQGFACRSHRNRNIFNSFCRPRPVSMSRSVLEALTSSTAMQCVPSDGCAMLLRVRASITLHERLRGLEACAMSLDTQETQCQSVWVARASHRQQGGQQLQVHFGCFAVSVAQHLYVTLRTIPHFCGVQLDQRHLVEDCGEEDVGRSVPDCLAGKLSYWVDRRRKAILVQVPRASGSPDYYLRLCLKRFTCEDAGAPVRVTANSVSQAVFLPYSQELPCLCLEGWSATPDAVRIQICPFENDTEALEVLWDTVYYHPESQTLSWEPACPVSGHVSLCWRPGPGAGCRKLQQSSQLVHRRVQYPLVDTQPQLCLKFSTSWGSWVRCPFEQRRFPTWKMTIQPSPTKGHLRVTFFSSSPAHFQVHLCHRRKSQLPACQRTLQASPLPSASGDLAAAPAFAFLDLPREEACAPGICIQGWRTDVHFSVPQQLCNLRSSGCPSLRGRRRPRTRPRPPTAGWAWRALNRRLGGGNGETIRP.

Positions Met-1–Ala-21 are cleaved as a signal peptide.

Its subcellular location is the secreted. The sequence is that of Interleukin-17 receptor E-like protein from Homo sapiens (Human).